The primary structure comprises 168 residues: 3-isopropylmalate dehydratase small subunit (168 aa).

It belongs to the LeuD family. LeuD type 2 subfamily. In terms of assembly, heterodimer of LeuC and LeuD.

The catalysed reaction is (2R,3S)-3-isopropylmalate = (2S)-2-isopropylmalate. It participates in amino-acid biosynthesis; L-leucine biosynthesis; L-leucine from 3-methyl-2-oxobutanoate: step 2/4. Its function is as follows. Catalyzes the isomerization between 2-isopropylmalate and 3-isopropylmalate, via the formation of 2-isopropylmaleate. The chain is 3-isopropylmalate dehydratase small subunit from Thermodesulfovibrio yellowstonii (strain ATCC 51303 / DSM 11347 / YP87).